The primary structure comprises 184 residues: Major urinary protein 3 (184 aa).

Positions 1–22 (MKLLLPLLLLLCLELTLVCIHA) are cleaved as a signal peptide. A glycan (N-linked (GlcNAc...) asparagine) is linked at Asn66. The cysteines at positions 86 and 179 are disulfide-linked.

Belongs to the calycin superfamily. Lipocalin family. In terms of processing, glycosylated. In terms of tissue distribution, abundant in the urine of adult male mice but absent from that of females.

It is found in the secreted. Its function is as follows. Binds pheromones that are released from drying urine of males. These pheromones affect the sexual behavior of females. This Mus musculus (Mouse) protein is Major urinary protein 3 (Mup3).